A 134-amino-acid polypeptide reads, in one-letter code: Protein NrdI (134 aa).

Belongs to the NrdI family.

Probably involved in ribonucleotide reductase function. This chain is Protein NrdI, found in Yersinia pseudotuberculosis serotype O:1b (strain IP 31758).